We begin with the raw amino-acid sequence, 472 residues long: Interferon-induced protein with tetratricopeptide repeats 2 (472 aa).

At serine 2 the chain carries N-acetylserine. TPR repeat units follow at residues 51 to 89 (ATMC…ADQA), 90 to 135 (EIRS…RIES), 136 to 171 (PELD…KPKN), 172 to 208 (PEFT…NPDN), 247 to 280 (TDVL…IPNN), 281 to 335 (AYLH…NLFR), 336 to 366 (VCSI…KELT), 367 to 405 (PVAK…NQKS), and 406 to 448 (REKE…KMQQ). A disordered region spans residues 446-472 (MQQADEDSERGLESGSLIPSASSWNGE). The segment covering 462–472 (LIPSASSWNGE) has biased composition (polar residues).

This sequence belongs to the IFIT family. As to quaternary structure, domain-swapped homodimer. Component of an interferon-dependent multiprotein complex, at least composed of IFIT1, IFIT2 and IFIT3. Interacts with IFIT1 and IFIT3. Interacts with STING1/MITA and disrupts its interaction with MAVS or TBK1. Interacts with EIF3E and EIF3C.

Its subcellular location is the cytoplasm. The protein resides in the endoplasmic reticulum. Its function is as follows. IFN-induced antiviral protein which inhibits expression of viral messenger RNAs lacking 2'-O-methylation of the 5' cap. The ribose 2'-O-methylation would provide a molecular signature to distinguish between self and non-self mRNAs by the host during viral infection. Viruses evolved several ways to evade this restriction system such as encoding their own 2'-O-methylase for their mRNAs or by stealing host cap containing the 2'-O-methylation (cap snatching mechanism). Binds AU-rich viral RNAs, with or without 5' triphosphorylation, RNA-binding is required for antiviral activity. Can promote apoptosis. This chain is Interferon-induced protein with tetratricopeptide repeats 2 (IFIT2), found in Homo sapiens (Human).